The following is a 242-amino-acid chain: MEIKLEEILKKQPLYSGKAKSIYEIDDDKVLIEFRDDITAGNGAKHDVKQGKGYLNALISSKLFEALEENGVKTHYIKYIEPRYMIAKKVEIIPIEVIVRNIAAGSLCRRYPFEEGKELPFPIVQFDYKNDEYGDPMLNEDIAVALGLATREELNKIKEIALKVNEVLKKLFDEKGIILVDFKIEIGKDREGNLLVADEISPDTMRLWDKETRDVLDKDVFRKDLGDVIAKYRIVAERLGLL.

It belongs to the SAICAR synthetase family.

The enzyme catalyses 5-amino-1-(5-phospho-D-ribosyl)imidazole-4-carboxylate + L-aspartate + ATP = (2S)-2-[5-amino-1-(5-phospho-beta-D-ribosyl)imidazole-4-carboxamido]succinate + ADP + phosphate + 2 H(+). It functions in the pathway purine metabolism; IMP biosynthesis via de novo pathway; 5-amino-1-(5-phospho-D-ribosyl)imidazole-4-carboxamide from 5-amino-1-(5-phospho-D-ribosyl)imidazole-4-carboxylate: step 1/2. This Methanocaldococcus jannaschii (strain ATCC 43067 / DSM 2661 / JAL-1 / JCM 10045 / NBRC 100440) (Methanococcus jannaschii) protein is Phosphoribosylaminoimidazole-succinocarboxamide synthase (purC).